A 512-amino-acid polypeptide reads, in one-letter code: Hyaluronidase PH-20 (512 aa).

The signal sequence occupies residues 1-35 (MGELQFKWLFWRSFAESGGTFQTVLIFLFIPYSLT). 2 disulfides stabilise this stretch: cysteine 60-cysteine 351 and cysteine 223-cysteine 237. N-linked (GlcNAc...) asparagine glycosylation occurs at asparagine 63. Residue glutamate 147 is the Proton donor of the active site. Asparagine 165 and asparagine 179 each carry an N-linked (GlcNAc...) asparagine glycan. N-linked (GlcNAc...) asparagine glycosylation is present at asparagine 368. 3 disulfides stabilise this stretch: cysteine 376-cysteine 387, cysteine 381-cysteine 435, and cysteine 437-cysteine 464. A glycan (N-linked (GlcNAc...) asparagine) is linked at asparagine 408.

The protein belongs to the glycosyl hydrolase 56 family.

Its subcellular location is the cell membrane. It catalyses the reaction Random hydrolysis of (1-&gt;4)-linkages between N-acetyl-beta-D-glucosamine and D-glucuronate residues in hyaluronate.. Functionally, involved in sperm-egg adhesion. Upon fertilization sperm must first penetrate a layer of cumulus cells that surrounds the egg before reaching the zona pellucida. The cumulus cells are embedded in a matrix containing hyaluronic acid which is formed prior to ovulation. This protein aids in penetrating the layer of cumulus cells by digesting hyaluronic acid. The sequence is that of Hyaluronidase PH-20 (Spam1) from Rattus norvegicus (Rat).